The primary structure comprises 121 residues: Griffithsin (121 aa).

The region spanning 1-120 is the Jacalin-type lectin domain; the sequence is SLTHRKFGGS…LDSLDIYYEQ (120 aa).

In terms of biological role, mixed specificity lectin with anti-HIV activity. Binds to HIV envelope glycoproteins, including exterior membrane glycoprotein gp120, and inhibits viral entry into cells. Binding to gp120 is dependent on gp120 being glycosylated, and is inhibited by mannose, glucose and N-acetylglucosamine. The protein is Griffithsin of Griffithsia sp. (strain Q66D336) (Red alga).